We begin with the raw amino-acid sequence, 184 residues long: Gremlin-1 (184 aa).

Positions 1-24 are cleaved as a signal peptide; the sequence is MNRTAYTVGALLLLLGTLLPAAEG. N2 and N42 each carry an N-linked (GlcNAc...) asparagine glycan. The tract at residues 24–78 is disordered; the sequence is GKKKGSQGAIPPPDKAQHNDSEQTQSPPQPGSRTRGRGQGRGTAMPGEEVLESSQ. Disulfide bonds link C94–C144, C108–C158, C118–C176, and C122–C178. Residues 94-184 form the CTCK domain; sequence CKTQPLKQTI…QCRCISIDLD (91 aa).

This sequence belongs to the DAN family. Homodimer; can also form homooligomers. Interacts with BMP2; can form higher oligomers with BMP2. Interacts with SLIT1 and SLIT2 in a glycosylation-dependent manner. As to expression, highly expressed in the brain, kidney, spleen, and testis and weakly expressed in the lung and liver. Predominantly expressed in differentiated cells as neurons in brain, type I cells in lung and globlet cells in intestine.

It is found in the secreted. In terms of biological role, cytokine that may play an important role during carcinogenesis and metanephric kidney organogenesis, as a BMP antagonist required for early limb outgrowth and patterning in maintaining the FGF4-SHH feedback loop. Down-regulates the BMP4 signaling in a dose-dependent manner. Antagonist of BMP2; inhibits BMP2-mediated differentiation of osteoblasts (in vitro). Acts as inhibitor of monocyte chemotaxis. Can inhibit the growth or viability of normal cells but not transformed cells when is overexpressed. This chain is Gremlin-1 (Grem1), found in Rattus norvegicus (Rat).